The sequence spans 1308 residues: Transposon TX1 uncharacterized 149 kDa protein (1308 aa).

The region spanning 494–765 (EAFKKGELPL…KIIKYLGVYL (272 aa)) is the Reverse transcriptase domain.

The sequence is that of Transposon TX1 uncharacterized 149 kDa protein from Xenopus laevis (African clawed frog).